A 62-amino-acid polypeptide reads, in one-letter code: Conotoxin Sr5.6 (62 aa).

An N-terminal signal peptide occupies residues 1-22 (MRCLPVFVILLLLIASASSVDA). A propeptide spanning residues 23 to 44 (QLKTKDDVPLTSVHDNAKGTQH) is cleaved from the precursor. Position 61 is a proline amide (Pro61).

It belongs to the conotoxin T superfamily. In terms of processing, contains 2 disulfide bonds that can be either 'C1-C3, C2-C4' or 'C1-C4, C2-C3', since these disulfide connectivities have been observed for conotoxins with cysteine framework V (for examples, see AC P0DQQ7 and AC P81755). In terms of tissue distribution, expressed by the venom duct.

It is found in the secreted. This chain is Conotoxin Sr5.6, found in Conus spurius (Alphabet cone).